The sequence spans 241 residues: tRNA (guanine-N(7)-)-methyltransferase (241 aa).

S-adenosyl-L-methionine contacts are provided by Glu71, Glu96, Asp123, and Asp146. Residue Asp146 is part of the active site. Residues Lys150, Asp182, and 219-222 (TKFE) each bind substrate.

The protein belongs to the class I-like SAM-binding methyltransferase superfamily. TrmB family.

The enzyme catalyses guanosine(46) in tRNA + S-adenosyl-L-methionine = N(7)-methylguanosine(46) in tRNA + S-adenosyl-L-homocysteine. The protein operates within tRNA modification; N(7)-methylguanine-tRNA biosynthesis. In terms of biological role, catalyzes the formation of N(7)-methylguanine at position 46 (m7G46) in tRNA. This Pseudoalteromonas translucida (strain TAC 125) protein is tRNA (guanine-N(7)-)-methyltransferase.